We begin with the raw amino-acid sequence, 596 residues long: Phosphoenolpyruvate carboxykinase [GTP] (596 aa).

Substrate-binding positions include R77 and 205-207; that span reads YGG. Mn(2+) is bound by residues K214 and H234. S256 is a binding site for substrate. Residue 257-262 coordinates GTP; the sequence is ACGKTN. C258 is a catalytic residue. D283 is a Mn(2+) binding site. Residues 362-388 form a disordered region; it reads KKGSTEKAAHPNSRFTAPAKNNPAISP. Position 373 to 375 (373 to 375) interacts with substrate; it reads NSR. GTP contacts are provided by residues R375, R406, and 499–502; that span reads YGDN.

Belongs to the phosphoenolpyruvate carboxykinase [GTP] family. As to quaternary structure, monomer. Mn(2+) is required as a cofactor.

It localises to the cytoplasm. The enzyme catalyses oxaloacetate + GTP = phosphoenolpyruvate + GDP + CO2. It functions in the pathway carbohydrate biosynthesis; gluconeogenesis. Its function is as follows. Catalyzes the conversion of oxaloacetate (OAA) to phosphoenolpyruvate (PEP), the rate-limiting step in the metabolic pathway that produces glucose from lactate and other precursors derived from the citric acid cycle. The chain is Phosphoenolpyruvate carboxykinase [GTP] from Anaeromyxobacter dehalogenans (strain 2CP-C).